The chain runs to 194 residues: Imidazoleglycerol-phosphate dehydratase (194 aa).

This sequence belongs to the imidazoleglycerol-phosphate dehydratase family.

The protein resides in the cytoplasm. It catalyses the reaction D-erythro-1-(imidazol-4-yl)glycerol 3-phosphate = 3-(imidazol-4-yl)-2-oxopropyl phosphate + H2O. The protein operates within amino-acid biosynthesis; L-histidine biosynthesis; L-histidine from 5-phospho-alpha-D-ribose 1-diphosphate: step 6/9. The polypeptide is Imidazoleglycerol-phosphate dehydratase (Bacillus cereus (strain B4264)).